A 220-amino-acid polypeptide reads, in one-letter code: Claudin-6 (220 aa).

Over 1–7 the chain is Cytoplasmic; the sequence is MASAGMQ. Residues 8–28 traverse the membrane as a helical segment; that stretch reads ILGVVLTLLGWVNGLVSCALP. Over 29–81 the chain is Extracellular; that stretch reads MWKVTAFIGNSIVVAQVVWEGLWMSCVVQSTGQMQCKVYDSLLALPQDLQAAR. A helical transmembrane segment spans residues 82-102; that stretch reads ALCVIALLVALFGLLVYLAGA. Topologically, residues 103–116 are cytoplasmic; sequence KCTTCVEEKDSKAR. Residues 117-137 traverse the membrane as a helical segment; the sequence is LVLTSGIVFVISGVLTLIPVC. Residues 138-160 lie on the Extracellular side of the membrane; that stretch reads WTAHAIIRDFYNPLVAEAQKREL. Residues 161–181 traverse the membrane as a helical segment; that stretch reads GASLYLGWAASGLLLLGGGLL. Residues 182–220 are Cytoplasmic-facing; it reads CCTCPSGGSQGPSHYMARYSTSAPAISRGPSEYPTKNYV. 4 positions are modified to phosphoserine: Ser-201, Ser-203, Ser-208, and Ser-212. Residues 219–220 are interactions with TJP1, TJP2 and TJP3; it reads YV.

Belongs to the claudin family. Directly interacts with TJP1/ZO-1, TJP2/ZO-2 and TJP3/ZO-3. Interacts with CLDN1, CD81 and OCLN. In terms of tissue distribution, expressed in the liver, in peripheral blood mononuclear cells and hepatocarcinoma cell lines.

The protein localises to the cell junction. It localises to the tight junction. The protein resides in the cell membrane. In terms of biological role, plays a major role in tight junction-specific obliteration of the intercellular space. Its function is as follows. (Microbial infection) Acts as a receptor for hepatitis C virus (HCV) entry into hepatic cells. The protein is Claudin-6 (CLDN6) of Homo sapiens (Human).